Consider the following 174-residue polypeptide: Terminase small subunit (174 aa).

This sequence belongs to the skunalikevirus terminase small subunit family.

Its function is as follows. Probable terminase small subunit. The terminase lies at a unique vertex of the procapsid and is composed of two subunits, a small terminase subunit and a large terminase subunit. Both terminase subunits heterooligomerize and are docked on the portal protein to form the packaging machine. Once the capsid is packaged with the DNA, the terminase complex is substituted by the connector proteins gp15. The polypeptide is Terminase small subunit (Lactococcus phage p2 (Lactococcus lactis bacteriophage p2)).